Consider the following 264-residue polypeptide: Endochitinase At2g43590 (264 aa).

Positions 1 to 24 (MAFTKISLVLLLCLLGFFSETVKS) are cleaved as a signal peptide. The region spanning 25 to 59 (QNCGCAPNLCCSQFGYCGTDDAYCGVGCRSGPCRG) is the Chitin-binding type-1 domain. Disulfide bonds link Cys27–Cys35, Cys29–Cys41, Cys34–Cys48, and Cys52–Cys57. Positions 66 to 264 (GSVGSIVTQG…GVDPGPNLSC (199 aa)) are catalytic. Glu128 functions as the Proton donor in the catalytic mechanism. N-linked (GlcNAc...) asparagine glycosylation is present at Asn261.

It belongs to the glycosyl hydrolase 19 family. Chitinase class I subfamily.

The catalysed reaction is Random endo-hydrolysis of N-acetyl-beta-D-glucosaminide (1-&gt;4)-beta-linkages in chitin and chitodextrins.. This chain is Endochitinase At2g43590, found in Arabidopsis thaliana (Mouse-ear cress).